A 566-amino-acid polypeptide reads, in one-letter code: Unconventional myosin-VIIa (566 aa).

In terms of domain architecture, Myosin motor spans 67–566 (MMEDMIQHLG…AGVVYYESQG (500 aa)). ATP is bound at residue 160-167 (GESGAGKT).

Belongs to the TRAFAC class myosin-kinesin ATPase superfamily. Myosin family. In terms of assembly, might homodimerize in a two headed molecule through the formation of a coiled-coil rod. Identified in a complex with USH1C and USH1G. Interacts with MYRIP. Interacts with RPE65. Interacts with CIB2. May interact with CALM. Interacts with WHRN. Interacts with PLEKHB1 (via PH domain). Interacts with PCDH15. Interacts with TWF2. Interacts with USH1G. Interacts with MYH9. Interacts (via MyTH4-FERM domains) with cytoplasmic regions of ADGRV1 and USH2A. Interacts with PDZD7 (via MyTH4-FERM domains). Interacts with CALML4.

The protein resides in the cytoplasm. It is found in the cell cortex. Its subcellular location is the cytoskeleton. It localises to the synapse. Functionally, myosins are actin-based motor molecules with ATPase activity. Unconventional myosins serve in intracellular movements. Their highly divergent tails bind to membranous compartments, which are then moved relative to actin filaments. In the retina, plays an important role in the renewal of the outer photoreceptor disks. Plays an important role in the distribution and migration of retinal pigment epithelial (RPE) melanosomes and phagosomes, and in the regulation of opsin transport in retinal photoreceptors. In the inner ear, plays an important role in differentiation, morphogenesis and organization of cochlear hair cell bundles. Motor protein that is a part of the functional network formed by USH1C, USH1G, CDH23 and MYO7A that mediates mechanotransduction in cochlear hair cells. Required for normal hearing. Involved in hair-cell vesicle trafficking of aminoglycosides, which are known to induce ototoxicity. The protein is Unconventional myosin-VIIa (MYO7A) of Sus scrofa (Pig).